Consider the following 81-residue polypeptide: Conotoxin Cl9.6 (81 aa).

The signal sequence occupies residues 1–20 (MSTLGMTLLILLLLLPLATP). Positions 21–40 (DDVGQPPKRDTLRNLLKIGT) are excised as a propeptide. Intrachain disulfides connect cysteine 46-cysteine 69, cysteine 54-cysteine 76, and cysteine 60-cysteine 78.

Expressed by the venom duct.

The protein localises to the secreted. The sequence is that of Conotoxin Cl9.6 from Californiconus californicus (California cone).